A 256-amino-acid chain; its full sequence is 1-(5-phosphoribosyl)-5-[(5-phosphoribosylamino)methylideneamino] imidazole-4-carboxamide isomerase (256 aa).

Asp8 serves as the catalytic Proton acceptor. The active-site Proton donor is Asp130.

The protein belongs to the HisA/HisF family.

It is found in the cytoplasm. The catalysed reaction is 1-(5-phospho-beta-D-ribosyl)-5-[(5-phospho-beta-D-ribosylamino)methylideneamino]imidazole-4-carboxamide = 5-[(5-phospho-1-deoxy-D-ribulos-1-ylimino)methylamino]-1-(5-phospho-beta-D-ribosyl)imidazole-4-carboxamide. It participates in amino-acid biosynthesis; L-histidine biosynthesis; L-histidine from 5-phospho-alpha-D-ribose 1-diphosphate: step 4/9. This Chlorobium phaeovibrioides (strain DSM 265 / 1930) (Prosthecochloris vibrioformis (strain DSM 265)) protein is 1-(5-phosphoribosyl)-5-[(5-phosphoribosylamino)methylideneamino] imidazole-4-carboxamide isomerase.